The chain runs to 336 residues: MLPFFPEPSLSYTQQNRTAVLLLNLGTPDAPTAQAVRPYLKSFLTDRRVVELPKWLWYPILHGLVLTLRPKKSAHAYEKIWFKEGSPLEVYTARQAAALAKRMPDLIVRHAMTYGNPSVADVLSELKAQGAGRLLVIPMYPQYAASSSGAAVDKVCEQLLLQRNQMSVRTVSRFYDDTGYIDAMKNHILRYWAEHGRGKKLMLSFHGVPQKHHDLGDPYPDECRHTAKLLAEALELTEDQYVVSFQSQFGRAKWVTPSTQDLFGKLPKQGVTELDVFCPGFLADCLETMEEIALMGREQFYEAGGKSYRYIPCLNDNPDWIDALVALAEENLGGWR.

Fe cation-binding residues include His206 and Glu287.

Belongs to the ferrochelatase family.

Its subcellular location is the cytoplasm. The enzyme catalyses heme b + 2 H(+) = protoporphyrin IX + Fe(2+). Its pathway is porphyrin-containing compound metabolism; protoheme biosynthesis; protoheme from protoporphyrin-IX: step 1/1. In terms of biological role, catalyzes the ferrous insertion into protoporphyrin IX. This is Ferrochelatase from Neisseria meningitidis serogroup C / serotype 2a (strain ATCC 700532 / DSM 15464 / FAM18).